Reading from the N-terminus, the 122-residue chain is Large ribosomal subunit protein uL14 (122 aa).

The protein belongs to the universal ribosomal protein uL14 family. Part of the 50S ribosomal subunit. Forms a cluster with proteins L3 and L19. In the 70S ribosome, L14 and L19 interact and together make contacts with the 16S rRNA in bridges B5 and B8.

Binds to 23S rRNA. Forms part of two intersubunit bridges in the 70S ribosome. In Pseudothermotoga lettingae (strain ATCC BAA-301 / DSM 14385 / NBRC 107922 / TMO) (Thermotoga lettingae), this protein is Large ribosomal subunit protein uL14.